The primary structure comprises 294 residues: Endonuclease 3 (294 aa).

The signal sequence occupies residues 1-24; the sequence is MGWSLRMWIVSILVLTQLVNGALC. A divalent metal cation contacts are provided by Trp25 and His30. Residue 25-30 coordinates substrate; the sequence is WGDAGH. Cys34 and Cys65 are disulfide-bonded. Positions 69 and 84 each coordinate a divalent metal cation. Residues 69–75, 84–87, and 94–99 contribute to the substrate site; these read DEIKKLP, HFAD, and NYEYSR. 3 cysteine pairs are disulfide-bonded: Cys93/Cys241, Cys101/Cys106, and Cys221/Cys228. Substrate-binding residues include Asn113 and Tyr131. A glycan (N-linked (GlcNAc...) asparagine) is linked at Asn113. A glycan (N-linked (GlcNAc...) asparagine) is linked at Asn132. A divalent metal cation is bound by residues His142, Asp146, His152, His176, and Asp180. The interval 142 to 191 is substrate binding; that stretch reads HYMGDIHQPLHEGFIGDLGGNKIKVHWYNQETNLHRVWDDMIIESALETY. 3 N-linked (GlcNAc...) asparagine glycosylation sites follow: Asn193, Asn224, and Asn247. Residues 279–294 constitute a propeptide, removed in mature form; the sequence is GTLNRIFSAKRKLARA.

This sequence belongs to the nuclease type I family. As to quaternary structure, monomer. Zn(2+) is required as a cofactor. It depends on Mn(2+) as a cofactor.

It catalyses the reaction Endonucleolytic cleavage to 5'-phosphomononucleotide and 5'-phosphooligonucleotide end-products.. Its function is as follows. Endonuclease that can use RNA and single-stranded DNA as substrates. In contradiction with PubMed:23620482, cannot hydrolyze single-stranded DNA and does not cleave mismatches. The polypeptide is Endonuclease 3 (Arabidopsis thaliana (Mouse-ear cress)).